The chain runs to 674 residues: Cysteine-rich receptor-like protein kinase 6 (674 aa).

The signal sequence occupies residues M1–A24. Residues Q25–V289 lie on the Extracellular side of the membrane. 2 consecutive Gnk2-homologous domains span residues F28–I132 and N139–F245. N36, N43, N61, N70, N104, N178, and N247 each carry an N-linked (GlcNAc...) asparagine glycan. A compositionally biased stretch (pro residues) spans P254–R266. A disordered region spans residues P254–S284. Positions S268–S284 are enriched in low complexity. N286 is a glycosylation site (N-linked (GlcNAc...) asparagine). Residues L290–F310 traverse the membrane as a helical segment. Topologically, residues L311–R674 are cytoplasmic. The Protein kinase domain occupies F351–F637. Residues I357 to V365 and K379 contribute to the ATP site. A Phosphotyrosine modification is found at Y424. D476 (proton acceptor) is an active-site residue. At S480 the chain carries Phosphoserine. Phosphothreonine is present on T516. Y524 is subject to Phosphotyrosine. The tract at residues L648–R674 is disordered. Polar residues predominate over residues S650–F659.

This sequence belongs to the protein kinase superfamily. Ser/Thr protein kinase family. CRK subfamily.

It localises to the membrane. The enzyme catalyses L-seryl-[protein] + ATP = O-phospho-L-seryl-[protein] + ADP + H(+). It carries out the reaction L-threonyl-[protein] + ATP = O-phospho-L-threonyl-[protein] + ADP + H(+). This chain is Cysteine-rich receptor-like protein kinase 6 (CRK6), found in Arabidopsis thaliana (Mouse-ear cress).